The sequence spans 377 residues: Phospho-N-acetylmuramoyl-pentapeptide-transferase (377 aa).

The next 10 helical transmembrane spans lie at 2 to 22 (IQLL…TPAL), 55 to 75 (VAIL…SVLA), 82 to 102 (ITLS…VGFL), 122 to 142 (MVLQ…FPDA), 162 to 182 (LAFA…NLIA), 195 to 215 (LDGL…LITL), 236 to 256 (PMDL…FLWW), 263 to 283 (IFMG…FAVL), 288 to 308 (LLLV…ILQV), and 343 to 363 (FWVI…GDWL).

Belongs to the glycosyltransferase 4 family. MraY subfamily. The cofactor is Mg(2+).

The protein localises to the cell membrane. It catalyses the reaction UDP-N-acetyl-alpha-D-muramoyl-L-alanyl-gamma-D-glutamyl-meso-2,6-diaminopimeloyl-D-alanyl-D-alanine + di-trans,octa-cis-undecaprenyl phosphate = di-trans,octa-cis-undecaprenyl diphospho-N-acetyl-alpha-D-muramoyl-L-alanyl-D-glutamyl-meso-2,6-diaminopimeloyl-D-alanyl-D-alanine + UMP. The protein operates within cell wall biogenesis; peptidoglycan biosynthesis. Its function is as follows. Catalyzes the initial step of the lipid cycle reactions in the biosynthesis of the cell wall peptidoglycan: transfers peptidoglycan precursor phospho-MurNAc-pentapeptide from UDP-MurNAc-pentapeptide onto the lipid carrier undecaprenyl phosphate, yielding undecaprenyl-pyrophosphoryl-MurNAc-pentapeptide, known as lipid I. The protein is Phospho-N-acetylmuramoyl-pentapeptide-transferase of Kocuria rhizophila (strain ATCC 9341 / DSM 348 / NBRC 103217 / DC2201).